The chain runs to 351 residues: DNA polymerase IV (351 aa).

A UmuC domain is found at 4 to 185 (IIHVDMDCFF…LPLAKIPGVG (182 aa)). Mg(2+) contacts are provided by D8 and D103. The active site involves E104.

It belongs to the DNA polymerase type-Y family. Monomer. Mg(2+) serves as cofactor.

The protein resides in the cytoplasm. The catalysed reaction is DNA(n) + a 2'-deoxyribonucleoside 5'-triphosphate = DNA(n+1) + diphosphate. Poorly processive, error-prone DNA polymerase involved in untargeted mutagenesis. Copies undamaged DNA at stalled replication forks, which arise in vivo from mismatched or misaligned primer ends. These misaligned primers can be extended by PolIV. Exhibits no 3'-5' exonuclease (proofreading) activity. May be involved in translesional synthesis, in conjunction with the beta clamp from PolIII. This Shigella dysenteriae serotype 1 (strain Sd197) protein is DNA polymerase IV.